The following is a 647-amino-acid chain: Leucine-rich repeat and WD repeat-containing protein 1 (647 aa).

LRR repeat units follow at residues 22-43, 48-69, 70-91, and 92-113; these read KIRS…PKLL, QLQE…LGLS, HLRV…CQFP, and KLEE…LKVS. Residues 204-267 form a disordered region; that stretch reads RTQVQKANSP…GSPVAGSDGS (64 aa). 5 positions are modified to phosphoserine: Ser212, Ser243, Ser251, Ser259, and Ser264. WD repeat units follow at residues 282–335, 341–379, 383–422, 426–472, 484–526, 542–582, and 598–646; these read HSKN…LHKY, EFFS…LLHV, FCCG…LWDI, NQDY…CWDV, EVEF…LWSW, VVLA…LYDV, and APTQ…IWGR.

The protein belongs to the LRWD1 family. In terms of assembly, integral component of the ORC complex. Directly interacts with CDT1, GMNN and ORC2. Interacts with ORC2 only when non-ubiquitinated; this interaction prevents LRWD1 ubiquitination and degradation. Some of these interactions are regulated in a cell-cycle dependent manner. Interaction with ORC1 occurs predominantly during G1. Association with phosphorylated ORC1 during mitosis is not efficient. Interaction with CDT1 occurs during G1 phase, as well as during mitosis with phosphorylated CDT1. Interaction with GMNN occurs from G1/S to mitosis. Interaction with ORC2 is observed throughout the cell cycle. The stoichiometry of the ORCA/ORC/CDT1/GMNN complex is 1:1:1:2. Interacts with CUL4A and DDB1; this interaction may lead to ubiquitination. Ubiquitinated; undergoes 'Lys-48'-linked polyubiquitination leading to proteasomal degradation. Ubiquitination occurs within the WD repeats at the end of the G1 phase. Ubiquitination may be catalyzed by the CUL4-DDB1 E3 ubiquitin-protein ligase complex and other E3 ligases. In terms of tissue distribution, testis-specific. Drastically down-regulated in testis from patients with Sertoli cell-only syndrome (SCOS).

It is found in the nucleus. It localises to the chromosome. The protein localises to the centromere. The protein resides in the telomere. Its subcellular location is the cytoplasm. It is found in the cytoskeleton. It localises to the microtubule organizing center. The protein localises to the centrosome. The protein resides in the kinetochore. In terms of biological role, required for G1/S transition. Recruits and stabilizes the origin recognition complex (ORC) onto chromatin during G1 to establish pre-replication complex (preRC) and to heterochromatic sites in post-replicated cells. Binds a combination of DNA and histone methylation repressive marks on heterochromatin. Binds histone H3 and H4 trimethylation marks H3K9me3, H3K27me3 and H4K20me3 in a cooperative manner with DNA methylation. Required for silencing of major satellite repeats. May be important ORC2, ORC3 and ORC4 stability. The protein is Leucine-rich repeat and WD repeat-containing protein 1 (LRWD1) of Homo sapiens (Human).